The chain runs to 141 residues: ATP synthase epsilon chain (141 aa).

The protein belongs to the ATPase epsilon chain family. In terms of assembly, F-type ATPases have 2 components, CF(1) - the catalytic core - and CF(0) - the membrane proton channel. CF(1) has five subunits: alpha(3), beta(3), gamma(1), delta(1), epsilon(1). CF(0) has three main subunits: a, b and c.

The protein localises to the cell inner membrane. In terms of biological role, produces ATP from ADP in the presence of a proton gradient across the membrane. The polypeptide is ATP synthase epsilon chain (Pseudomonas aeruginosa (strain LESB58)).